Here is a 166-residue protein sequence, read N- to C-terminus: Putative tRNA (cytidine(34)-2'-O)-methyltransferase (166 aa).

4 residues coordinate S-adenosyl-L-methionine: L83, G109, I130, and S138.

It belongs to the class IV-like SAM-binding methyltransferase superfamily. RNA methyltransferase TrmH family. TrmL subfamily.

It localises to the cytoplasm. It catalyses the reaction cytidine(34) in tRNA + S-adenosyl-L-methionine = 2'-O-methylcytidine(34) in tRNA + S-adenosyl-L-homocysteine + H(+). The catalysed reaction is 5-carboxymethylaminomethyluridine(34) in tRNA(Leu) + S-adenosyl-L-methionine = 5-carboxymethylaminomethyl-2'-O-methyluridine(34) in tRNA(Leu) + S-adenosyl-L-homocysteine + H(+). Functionally, could methylate the ribose at the nucleotide 34 wobble position in tRNA. In Mycoplasma pneumoniae (strain ATCC 29342 / M129 / Subtype 1) (Mycoplasmoides pneumoniae), this protein is Putative tRNA (cytidine(34)-2'-O)-methyltransferase.